The following is a 181-amino-acid chain: Oligoribonuclease (181 aa).

One can recognise an Exonuclease domain in the interval 8 to 171; sequence LVWLDMEMTG…ADIYESIDEL (164 aa). The active site involves Tyr129.

It belongs to the oligoribonuclease family.

The protein localises to the cytoplasm. In terms of biological role, 3'-to-5' exoribonuclease specific for small oligoribonucleotides. This chain is Oligoribonuclease, found in Bordetella bronchiseptica (strain ATCC BAA-588 / NCTC 13252 / RB50) (Alcaligenes bronchisepticus).